Consider the following 261-residue polypeptide: NAD-capped RNA hydrolase NudC (261 aa).

Position 74 (Arg-74) interacts with substrate. Positions 103, 106, 121, and 124 each coordinate Zn(2+). Residue Tyr-129 participates in substrate binding. One can recognise a Nudix hydrolase domain in the interval 130–253; that stretch reads PRIFPCIIVA…TIARALIEQT (124 aa). Ala-163, Glu-179, and Glu-183 together coordinate a divalent metal cation. The Nudix box signature appears at 164–185; that stretch reads GFVEVGETLEQCVAREVKEETG. 197-204 contributes to the substrate binding site; it reads QPWAFPSS. Glu-224 is a binding site for a divalent metal cation. A substrate-binding site is contributed by Ala-246.

It belongs to the Nudix hydrolase family. NudC subfamily. As to quaternary structure, homodimer. It depends on Mg(2+) as a cofactor. Mn(2+) serves as cofactor. Zn(2+) is required as a cofactor.

It carries out the reaction a 5'-end NAD(+)-phospho-ribonucleoside in mRNA + H2O = a 5'-end phospho-adenosine-phospho-ribonucleoside in mRNA + beta-nicotinamide D-ribonucleotide + 2 H(+). The enzyme catalyses NAD(+) + H2O = beta-nicotinamide D-ribonucleotide + AMP + 2 H(+). It catalyses the reaction NADH + H2O = reduced beta-nicotinamide D-ribonucleotide + AMP + 2 H(+). Functionally, mRNA decapping enzyme that specifically removes the nicotinamide adenine dinucleotide (NAD) cap from a subset of mRNAs by hydrolyzing the diphosphate linkage to produce nicotinamide mononucleotide (NMN) and 5' monophosphate mRNA. The NAD-cap is present at the 5'-end of some mRNAs and stabilizes RNA against 5'-processing. Has preference for mRNAs with a 5'-end purine. Catalyzes the hydrolysis of a broad range of dinucleotide pyrophosphates. This Vibrio vulnificus (strain CMCP6) protein is NAD-capped RNA hydrolase NudC.